We begin with the raw amino-acid sequence, 419 residues long: Argininosuccinate synthase (419 aa).

ATP contacts are provided by residues 9-17 (AYSGGLDTS) and alanine 35. Tyrosine 86 and serine 91 together coordinate L-citrulline. 114-122 (AHGATGKGN) provides a ligand contact to ATP. L-aspartate is bound by residues threonine 118, asparagine 122, and aspartate 123. Residue asparagine 122 coordinates L-citrulline. 5 residues coordinate L-citrulline: arginine 126, serine 179, serine 188, glutamate 270, and tyrosine 282.

It belongs to the argininosuccinate synthase family. Type 1 subfamily. Homotetramer.

The enzyme catalyses L-citrulline + L-aspartate + ATP = 2-(N(omega)-L-arginino)succinate + AMP + diphosphate + H(+). The protein operates within amino-acid biosynthesis; L-arginine biosynthesis; L-arginine from L-ornithine and carbamoyl phosphate: step 2/3. It functions in the pathway nitrogen metabolism; urea cycle; (N(omega)-L-arginino)succinate from L-aspartate and L-citrulline: step 1/1. This chain is Argininosuccinate synthase, found in Drosophila melanogaster (Fruit fly).